The following is a 421-amino-acid chain: Serine--tRNA ligase (421 aa).

229 to 231 (TSE) contributes to the L-serine binding site. Residue 260–262 (RRE) participates in ATP binding. An L-serine-binding site is contributed by Glu283. 347 to 350 (EISS) is a binding site for ATP. An L-serine-binding site is contributed by Ser381.

Belongs to the class-II aminoacyl-tRNA synthetase family. Type-1 seryl-tRNA synthetase subfamily. As to quaternary structure, homodimer. The tRNA molecule binds across the dimer.

It is found in the cytoplasm. It catalyses the reaction tRNA(Ser) + L-serine + ATP = L-seryl-tRNA(Ser) + AMP + diphosphate + H(+). The enzyme catalyses tRNA(Sec) + L-serine + ATP = L-seryl-tRNA(Sec) + AMP + diphosphate + H(+). It functions in the pathway aminoacyl-tRNA biosynthesis; selenocysteinyl-tRNA(Sec) biosynthesis; L-seryl-tRNA(Sec) from L-serine and tRNA(Sec): step 1/1. In terms of biological role, catalyzes the attachment of serine to tRNA(Ser). Is also able to aminoacylate tRNA(Sec) with serine, to form the misacylated tRNA L-seryl-tRNA(Sec), which will be further converted into selenocysteinyl-tRNA(Sec). The protein is Serine--tRNA ligase of Fusobacterium nucleatum subsp. nucleatum (strain ATCC 25586 / DSM 15643 / BCRC 10681 / CIP 101130 / JCM 8532 / KCTC 2640 / LMG 13131 / VPI 4355).